A 123-amino-acid polypeptide reads, in one-letter code: U11/U12 small nuclear ribonucleoprotein 25 kDa protein (123 aa).

Residues 32–123 form the Ubiquitin-like domain; sequence MTVRVCKMDG…VSFIKKLRQK (92 aa).

In terms of assembly, component of the U11/U12 snRNPs that are part of the U12-type spliceosome.

It localises to the nucleus. The sequence is that of U11/U12 small nuclear ribonucleoprotein 25 kDa protein (Snrnp25) from Mus musculus (Mouse).